Consider the following 354-residue polypeptide: Guanine nucleotide-binding protein G(i) subunit alpha-3 (354 aa).

The N-myristoyl glycine moiety is linked to residue Gly2. Cys3 is lipidated: S-palmitoyl cysteine. One can recognise a G-alpha domain in the interval 32 to 354; the sequence is KEVKLLLLGA…KNNLKECGLY (323 aa). A G1 motif region spans residues 35–48; sequence KLLLLGAGESGKST. Positions 42, 43, 44, 45, 46, 47, 48, 150, 151, 175, 176, 177, 178, 179, 180, 181, 201, 203, 269, 270, 272, 273, 325, 326, and 327 each coordinate GTP. Ser47 contributes to the Mg(2+) binding site. Positions 173–181 are G2 motif; it reads DVLRTRVKT. Thr181 serves as a coordination point for Mg(2+). Positions 196–205 are G3 motif; the sequence is FKMFDVGGQR. The segment at 265-272 is G4 motif; it reads ILFLNKKD. A G5 motif region spans residues 324-329; the sequence is TCATDT.

The protein belongs to the G-alpha family. G(i/o/t/z) subfamily. As to quaternary structure, heterotrimeric G proteins are composed of 3 units; alpha, beta and gamma. The alpha subunit contains the guanine nucleotide binding site. GTP binding causes dissociation of the heterotrimer, liberating the individual subunits so that they can interact with downstream effector proteins. Forms a complex with CCDC88A/GIV and EGFR which leads to enhanced EGFR signaling and triggering of cell migration; ligand stimulation is required for recruitment of GNAI3 to the complex. Interacts (inactive GDP-bound form) with CCDC88A/GIV (via GBA motif); the interaction leads to activation of GNAI3. Interacts (inactive GDP-bound form) with CCDC88C/DAPLE (via GBA motif); the interaction leads to activation of GNAI3. Interacts (inactive GDP-bound form) with NUCB1 (via GBA motif) and NUCB2 (via GBA motif); the interaction leads to activation of GNAI3. Interacts (inactive GDP-bound form) with PLCD4 (via GBA motif); the interaction leads to activation of GNAI3. Interacts with INSR; the interaction is probably mediated by CCDC88A/GIV. Interacts with GPSM1. Interacts (GDP-bound form) with GPSM2 (via GoLoco domains). Does not interact with RGS2. Interacts with RGS8 and RGS10; this strongly enhances the intrinsic GTPase activity. Interacts with RGS16; this strongly enhances the intrinsic GTPase activity. Interacts with RGS12. Interacts (via active GTP- or inactive GDP-bound form) with RGS14. Interacts (via active GTP-bound form) with TRPC5 (via ANK repeats) in a homotetrameric ion channel; the interaction is direct and activates the channel activity.

It localises to the cytoplasm. The protein resides in the cell membrane. The protein localises to the cytoskeleton. Its subcellular location is the microtubule organizing center. It is found in the centrosome. Its function is as follows. Heterotrimeric guanine nucleotide-binding proteins (G proteins) function as transducers downstream of G protein-coupled receptors (GPCRs) in numerous signaling cascades. The alpha chain contains the guanine nucleotide binding site and alternates between an active, GTP-bound state and an inactive, GDP-bound state. Signaling by an activated GPCR promotes GDP release and GTP binding. The alpha subunit has a low GTPase activity that converts bound GTP to GDP, thereby terminating the signal. Both GDP release and GTP hydrolysis are modulated by numerous regulatory proteins. Signaling is mediated via effector proteins, such as adenylate cyclase. Inhibits adenylate cyclase activity, leading to decreased intracellular cAMP levels. Stimulates the activity of receptor-regulated K(+) channels. The active GTP-bound form prevents the association of RGS14 with centrosomes and is required for the translocation of RGS14 from the cytoplasm to the plasma membrane. May play a role in cell division. The active GTP-bound form activates the calcium permeant TRPC5 ion channels. This Cricetulus griseus (Chinese hamster) protein is Guanine nucleotide-binding protein G(i) subunit alpha-3 (GNAI3).